The sequence spans 513 residues: Probable tubulin polyglutamylase ttll-15 (513 aa).

The TTL domain maps to 73–411 (VTGSYESAHT…STPITKEADI (339 aa)). ATP-binding positions include 216 to 219 (QKFV), K229, and D231.

The protein belongs to the tubulin--tyrosine ligase family. In terms of tissue distribution, expressed in hypodermis and pharyngeal muscles.

Probable polyglutamylase that forms polyglutamate side chains on tubulin. Probably acts when complexed with other proteins. Appears to be dispensable for polar spindle formation in dividing embryonic cells, for cilia-dependent osmotic avoidance and for male mating behavior. Regulates microtubule dynamics in uterine muscle cells. The chain is Probable tubulin polyglutamylase ttll-15 from Caenorhabditis elegans.